Reading from the N-terminus, the 495-residue chain is Glycerol kinase (495 aa).

T11 serves as a coordination point for ADP. Residues T11, T12, and S13 each coordinate ATP. Residue T11 participates in sn-glycerol 3-phosphate binding. R15 serves as a coordination point for ADP. Residues R81, E82, Y133, and D242 each coordinate sn-glycerol 3-phosphate. 5 residues coordinate glycerol: R81, E82, Y133, D242, and Q243. 2 residues coordinate ADP: T264 and G307. The ATP site is built by T264, G307, Q311, and G408. Positions 408 and 412 each coordinate ADP.

This sequence belongs to the FGGY kinase family.

The enzyme catalyses glycerol + ATP = sn-glycerol 3-phosphate + ADP + H(+). Its pathway is polyol metabolism; glycerol degradation via glycerol kinase pathway; sn-glycerol 3-phosphate from glycerol: step 1/1. With respect to regulation, inhibited by fructose 1,6-bisphosphate (FBP). Key enzyme in the regulation of glycerol uptake and metabolism. Catalyzes the phosphorylation of glycerol to yield sn-glycerol 3-phosphate. The sequence is that of Glycerol kinase from Citrifermentans bemidjiense (strain ATCC BAA-1014 / DSM 16622 / JCM 12645 / Bem) (Geobacter bemidjiensis).